The sequence spans 179 residues: Large ribosomal subunit protein uL5 (179 aa).

Belongs to the universal ribosomal protein uL5 family. Part of the 50S ribosomal subunit; part of the 5S rRNA/L5/L18/L25 subcomplex. Contacts the 5S rRNA and the P site tRNA. Forms a bridge to the 30S subunit in the 70S ribosome.

Its function is as follows. This is one of the proteins that bind and probably mediate the attachment of the 5S RNA into the large ribosomal subunit, where it forms part of the central protuberance. In the 70S ribosome it contacts protein S13 of the 30S subunit (bridge B1b), connecting the 2 subunits; this bridge is implicated in subunit movement. Contacts the P site tRNA; the 5S rRNA and some of its associated proteins might help stabilize positioning of ribosome-bound tRNAs. In Pseudomonas putida (strain ATCC 700007 / DSM 6899 / JCM 31910 / BCRC 17059 / LMG 24140 / F1), this protein is Large ribosomal subunit protein uL5.